A 301-amino-acid polypeptide reads, in one-letter code: Ribosomal RNA small subunit methyltransferase A (301 aa).

Positions 23, 25, 50, 72, 97, and 149 each coordinate S-adenosyl-L-methionine.

It belongs to the class I-like SAM-binding methyltransferase superfamily. rRNA adenine N(6)-methyltransferase family. RsmA subfamily.

It localises to the cytoplasm. The enzyme catalyses adenosine(1518)/adenosine(1519) in 16S rRNA + 4 S-adenosyl-L-methionine = N(6)-dimethyladenosine(1518)/N(6)-dimethyladenosine(1519) in 16S rRNA + 4 S-adenosyl-L-homocysteine + 4 H(+). Specifically dimethylates two adjacent adenosines (A1518 and A1519) in the loop of a conserved hairpin near the 3'-end of 16S rRNA in the 30S particle. May play a critical role in biogenesis of 30S subunits. The protein is Ribosomal RNA small subunit methyltransferase A of Rickettsia conorii (strain ATCC VR-613 / Malish 7).